A 212-amino-acid polypeptide reads, in one-letter code: Uridine kinase (212 aa).

13–20 (GGSGSGKT) lines the ATP pocket.

This sequence belongs to the uridine kinase family.

It is found in the cytoplasm. It carries out the reaction uridine + ATP = UMP + ADP + H(+). It catalyses the reaction cytidine + ATP = CMP + ADP + H(+). The protein operates within pyrimidine metabolism; CTP biosynthesis via salvage pathway; CTP from cytidine: step 1/3. It participates in pyrimidine metabolism; UMP biosynthesis via salvage pathway; UMP from uridine: step 1/1. The protein is Uridine kinase of Bacillus cereus (strain G9842).